The following is a 363-amino-acid chain: Protein MAK32 (363 aa).

To S.pombe SpAC4G8.14c.

Necessary for the structural stability of L-A double-stranded RNA-containing particles. Necessary for growth at 37 degrees Celsius as well as for maintenance of the killer plasmid. The sequence is that of Protein MAK32 (MAK32) from Saccharomyces cerevisiae (strain ATCC 204508 / S288c) (Baker's yeast).